The primary structure comprises 250 residues: GTP cyclohydrolase 1 type 2 homolog (250 aa).

5 residues coordinate a divalent metal cation: histidine 63, histidine 64, aspartate 100, histidine 218, and glutamate 222.

The protein belongs to the GTP cyclohydrolase I type 2/NIF3 family. In terms of assembly, homohexamer.

In Pyrococcus horikoshii (strain ATCC 700860 / DSM 12428 / JCM 9974 / NBRC 100139 / OT-3), this protein is GTP cyclohydrolase 1 type 2 homolog.